Reading from the N-terminus, the 155-residue chain is 6,7-dimethyl-8-ribityllumazine synthase (155 aa).

Residues Y23, 57–59 (AWE), and 81–83 (CVI) each bind 5-amino-6-(D-ribitylamino)uracil. 86 to 87 (ET) provides a ligand contact to (2S)-2-hydroxy-3-oxobutyl phosphate. H89 acts as the Proton donor in catalysis. Residue F114 participates in 5-amino-6-(D-ribitylamino)uracil binding. R128 contacts (2S)-2-hydroxy-3-oxobutyl phosphate.

It belongs to the DMRL synthase family.

It carries out the reaction (2S)-2-hydroxy-3-oxobutyl phosphate + 5-amino-6-(D-ribitylamino)uracil = 6,7-dimethyl-8-(1-D-ribityl)lumazine + phosphate + 2 H2O + H(+). The protein operates within cofactor biosynthesis; riboflavin biosynthesis; riboflavin from 2-hydroxy-3-oxobutyl phosphate and 5-amino-6-(D-ribitylamino)uracil: step 1/2. Its function is as follows. Catalyzes the formation of 6,7-dimethyl-8-ribityllumazine by condensation of 5-amino-6-(D-ribitylamino)uracil with 3,4-dihydroxy-2-butanone 4-phosphate. This is the penultimate step in the biosynthesis of riboflavin. This is 6,7-dimethyl-8-ribityllumazine synthase from Rhodopirellula baltica (strain DSM 10527 / NCIMB 13988 / SH1).